The following is an 888-amino-acid chain: G-protein coupled receptor family C group 6 member A (888 aa).

A signal peptide spans 1–15 (MALLMTCFVIVFAAS). Residues 16 to 568 (QPCQTPDDLV…KEMEYLDSLA (553 aa)) lie on the Extracellular side of the membrane. N-linked (GlcNAc...) asparagine glycans are attached at residues Asn-251, Asn-322, Asn-532, and Asn-544. A helical transmembrane segment spans residues 569–589 (ILLLALSLLGILFVLAIGIIF). The Cytoplasmic segment spans residues 590–604 (TRNLNTPVVKSSGEL). The chain crosses the membrane as a helical span at residues 605-625 (MVRYVILFCHFLNFAGTGFFI). Residues 626 to 641 (REPQSFTCKTRQTLIC) are Extracellular-facing. Residues 642-662 (MSFTLCISYILMKSLKILLAF) traverse the membrane as a helical segment. Residues 663–676 (SSKLQNFLKCFYKP) lie on the Cytoplasmic side of the membrane. Residues 677–697 (IPIIFTCTGIVVVCTLLIFAA) form a helical membrane-spanning segment. Topologically, residues 698–718 (PAVGQNVSLPRVIIFECEEGS) are extracellular. Residues 719–739 (ILAFGSMLGYAAILAFMCFIC) traverse the membrane as a helical segment. At 740 to 754 (AFKGRKFPENYNEAK) the chain is on the cytoplasmic side. A helical membrane pass occupies residues 755–775 (FITFGMLIYFIAWITFIPIYT). The Extracellular portion of the chain corresponds to 776-779 (FGKY). A helical membrane pass occupies residues 780 to 800 (MLVVEIIIILISNYGICCMFF). The Cytoplasmic segment spans residues 801–888 (PKCYVILSKQ…ALPPKRISSI (88 aa)).

This sequence belongs to the G-protein coupled receptor 3 family. As to quaternary structure, homodimer; disulfide-linked.

Its subcellular location is the cell membrane. Receptor activated by multiple ligands, including osteocalcin (BGLAP), basic amino acids, and various cations. Activated by amino acids with a preference for basic amino acids such as L-Lys, L-Arg and L-ornithine but also by small and polar amino acids. The L-alpha amino acids respond is augmented by divalent cations Ca(2+) and Mg(2+). Seems to act through a G(q)/G(11) and G(i)-coupled pathway. Regulates testosterone production by acting as a ligand for uncarboxylated osteocalcin hormone: osteocalcin-binding at the surface of Leydig cells initiates a signaling response that promotes the expression of enzymes required for testosterone synthesis in a CREB-dependent manner. Mediates the non-genomic effects of androgens in multiple tissue. May coordinate nutritional and hormonal anabolic signals through the sensing of extracellular amino acids, osteocalcin, divalent ions and its responsiveness to anabolic steroids. This Bos taurus (Bovine) protein is G-protein coupled receptor family C group 6 member A (GPRC6A).